Consider the following 70-residue polypeptide: Large ribosomal subunit protein eL38 (70 aa).

Belongs to the eukaryotic ribosomal protein eL38 family.

This Caenorhabditis elegans protein is Large ribosomal subunit protein eL38 (rpl-38).